The following is a 257-amino-acid chain: Acetylglutamate kinase (257 aa).

Substrate-binding positions include G43–G44, R65, and N157. Residues D180–L185 and I208–T210 contribute to the ATP site.

Belongs to the acetylglutamate kinase family. ArgB subfamily. As to quaternary structure, homodimer.

The protein resides in the cytoplasm. It catalyses the reaction N-acetyl-L-glutamate + ATP = N-acetyl-L-glutamyl 5-phosphate + ADP. It participates in amino-acid biosynthesis; L-arginine biosynthesis; N(2)-acetyl-L-ornithine from L-glutamate: step 2/4. In terms of biological role, catalyzes the ATP-dependent phosphorylation of N-acetyl-L-glutamate. In Salmonella agona (strain SL483), this protein is Acetylglutamate kinase.